The sequence spans 72 residues: Multiple antibiotic resistance protein MarB (72 aa).

The sequence is that of Multiple antibiotic resistance protein MarB (marB) from Escherichia coli (strain K12).